The chain runs to 342 residues: Tetraacyldisaccharide 4'-kinase (342 aa).

Residue 68 to 75 participates in ATP binding; the sequence is TVGGTGKT.

The protein belongs to the LpxK family.

The catalysed reaction is a lipid A disaccharide + ATP = a lipid IVA + ADP + H(+). It participates in glycolipid biosynthesis; lipid IV(A) biosynthesis; lipid IV(A) from (3R)-3-hydroxytetradecanoyl-[acyl-carrier-protein] and UDP-N-acetyl-alpha-D-glucosamine: step 6/6. In terms of biological role, transfers the gamma-phosphate of ATP to the 4'-position of a tetraacyldisaccharide 1-phosphate intermediate (termed DS-1-P) to form tetraacyldisaccharide 1,4'-bis-phosphate (lipid IVA). In Burkholderia cenocepacia (strain ATCC BAA-245 / DSM 16553 / LMG 16656 / NCTC 13227 / J2315 / CF5610) (Burkholderia cepacia (strain J2315)), this protein is Tetraacyldisaccharide 4'-kinase.